The sequence spans 101 residues: Small ribosomal subunit protein uS14 (101 aa).

The segment at 36–72 is disordered; it reads GTDESREAARAGIQRLPRDASPIRVRNRDGIDGRPRG. The segment covering 61–70 has biased composition (basic and acidic residues); the sequence is RNRDGIDGRP.

This sequence belongs to the universal ribosomal protein uS14 family. Part of the 30S ribosomal subunit. Contacts proteins S3 and S10.

Its function is as follows. Binds 16S rRNA, required for the assembly of 30S particles and may also be responsible for determining the conformation of the 16S rRNA at the A site. In Clavibacter michiganensis subsp. michiganensis (strain NCPPB 382), this protein is Small ribosomal subunit protein uS14.